Here is a 506-residue protein sequence, read N- to C-terminus: Histidine ammonia-lyase (506 aa).

A cross-link (5-imidazolinone (Ala-Gly)) is located at residues 144–146 (ASG). Residue Ser145 is modified to 2,3-didehydroalanine (Ser).

The protein belongs to the PAL/histidase family. Post-translationally, contains an active site 4-methylidene-imidazol-5-one (MIO), which is formed autocatalytically by cyclization and dehydration of residues Ala-Ser-Gly.

It localises to the cytoplasm. The catalysed reaction is L-histidine = trans-urocanate + NH4(+). Its pathway is amino-acid degradation; L-histidine degradation into L-glutamate; N-formimidoyl-L-glutamate from L-histidine: step 1/3. The sequence is that of Histidine ammonia-lyase from Legionella pneumophila (strain Lens).